Consider the following 517-residue polypeptide: Ribose import ATP-binding protein RbsA 2 (517 aa).

ABC transporter domains lie at L10–I245 and D255–H498. Residue G42 to S49 coordinates ATP. The segment at T497–H517 is disordered.

The protein belongs to the ABC transporter superfamily. Ribose importer (TC 3.A.1.2.1) family. As to quaternary structure, the complex is composed of an ATP-binding protein (RbsA), two transmembrane proteins (RbsC) and a solute-binding protein (RbsB).

Its subcellular location is the cell membrane. It carries out the reaction D-ribose(out) + ATP + H2O = D-ribose(in) + ADP + phosphate + H(+). Functionally, part of the ABC transporter complex RbsABC involved in ribose import. Responsible for energy coupling to the transport system. The protein is Ribose import ATP-binding protein RbsA 2 of Streptomyces coelicolor (strain ATCC BAA-471 / A3(2) / M145).